The chain runs to 702 residues: Ferrioxamine B receptor (702 aa).

The signal sequence occupies residues 1–30 (MPLEMFMFATTRMALLIGGAIGGATFPLFA). One can recognise a TBDR plug domain in the interval 55–168 (PDIETPQSVS…PGGIVALTSR (114 aa)). Residues 173-702 (DAGGEVKLFA…SIVGSVSWAF (530 aa)) enclose the TBDR beta-barrel domain.

Belongs to the TonB-dependent receptor family.

It localises to the cell outer membrane. Its function is as follows. Ferrioxamine binding and uptake, in association with the TonB protein. May play a role in intestinal colonization. The protein is Ferrioxamine B receptor (foxA) of Salmonella typhimurium (strain SL1344).